Consider the following 284-residue polypeptide: MSAEQQAVVSAEQQAVVSAEQPAVVSADQPAVTWTVVVPVKVTSQAKTRLAGDLSPTQRVELVRAMVVDTVAAARATPTVDRVVVVTDDPDVVADLSADEPAGTDAERRADPSAENRASTSAQHPCLRAHLDVVPEPSPAAGLNAAIRAGVASARSGGGLAAVSVAVLLGDLPALRPGDLGAALEAASAHHRAVVTDADGSGTTLLTARSGVELYPAFGPGSAAEHAARGHVVLDVADVPAVSGLRQDVDLARDLAAVAALGPGPRTTEVLDRWARLGEGSSAA.

The disordered stretch occupies residues 94-123 (ADLSADEPAGTDAERRADPSAENRASTSAQ). Positions 105–114 (DAERRADPSA) are enriched in basic and acidic residues. Residues threonine 203, glycine 219, and serine 222 each contribute to the phosphoenolpyruvate site.

The protein belongs to the CofC family.

The enzyme catalyses phosphoenolpyruvate + GTP + H(+) = enolpyruvoyl-2-diphospho-5'-guanosine + diphosphate. The protein operates within cofactor biosynthesis; coenzyme F420 biosynthesis. In terms of biological role, guanylyltransferase that catalyzes the activation of phosphoenolpyruvate (PEP) as enolpyruvoyl-2-diphospho-5'-guanosine, via the condensation of PEP with GTP. It is involved in the biosynthesis of coenzyme F420, a hydride carrier cofactor. The polypeptide is Phosphoenolpyruvate guanylyltransferase (Sanguibacter keddieii (strain ATCC 51767 / DSM 10542 / NCFB 3025 / ST-74)).